Here is a 202-residue protein sequence, read N- to C-terminus: Energy-coupling factor transporter transmembrane protein BioN (202 aa).

3 consecutive transmembrane segments (helical) span residues 21-40 (LLSL…LLLL), 44-63 (VLVA…EALL), and 68-90 (IFLT…AALV).

The protein belongs to the CbiQ family. In terms of assembly, part of a biotin transporter complex composed of BioM, BioN and BioY.

It is found in the cell inner membrane. In terms of biological role, involved in biotin uptake. The chain is Energy-coupling factor transporter transmembrane protein BioN (bioN) from Rhizobium etli (strain ATCC 51251 / DSM 11541 / JCM 21823 / NBRC 15573 / CFN 42).